The following is a 149-amino-acid chain: Large ribosomal subunit protein bL9 (149 aa).

The protein belongs to the bacterial ribosomal protein bL9 family.

Its function is as follows. Binds to the 23S rRNA. This Thermotoga maritima (strain ATCC 43589 / DSM 3109 / JCM 10099 / NBRC 100826 / MSB8) protein is Large ribosomal subunit protein bL9.